Consider the following 148-residue polypeptide: Cystatin-D (148 aa).

The N-terminal stretch at 1–33 (MASLLSPSMPVLAAVALTLTLAVIPEASTNAEA) is a signal peptide. In terms of domain architecture, Cystatin kininogen-type spans 36 to 148 (VVLGGVEPAD…SMTNFNCYNF (113 aa)). 2 disulfide bridges follow: Cys-101-Cys-111 and Cys-125-Cys-145.

The protein belongs to the cystatin family. As to expression, in cartilage, expressed mainly in mature chondrocytes including prehypertrophic and hypertrophic cells (at protein level). Expressed exclusively in cartilage.

It localises to the cytoplasm. It is found in the cytosol. May play a role in the last steps of the chondrocyte differentiation pathway as an inducer of maturation. Induces chondrocyte calcification during endochondral ossification by playing a role in the transcriptional inhibition of ENPP1, a generator of pyrophosphate which inhibits calcification. Possibly impairs the binding of a transcription factor to the ENPP1 promoter. Unlike other cystatins, does not have thiol protease inhibitor activity. The polypeptide is Cystatin-D (Mus musculus (Mouse)).